Here is a 179-residue protein sequence, read N- to C-terminus: Large ribosomal subunit protein uL6 (179 aa).

It belongs to the universal ribosomal protein uL6 family. In terms of assembly, part of the 50S ribosomal subunit.

Its function is as follows. This protein binds to the 23S rRNA, and is important in its secondary structure. It is located near the subunit interface in the base of the L7/L12 stalk, and near the tRNA binding site of the peptidyltransferase center. This is Large ribosomal subunit protein uL6 from Geotalea uraniireducens (strain Rf4) (Geobacter uraniireducens).